A 129-amino-acid polypeptide reads, in one-letter code: Intraflagellar transport protein 20 homolog (129 aa).

Residues 89 to 121 adopt a coiled-coil conformation; that stretch reads VLLQMTIRELTVEKERLRVELEAVRKIEKEQDE.

Component of the IFT complex B composed of at least che-2, che-13, dyf-1, dyf-3, dyf-6, dyf-11, dyf-13, ift-20, ift-74, ift-81, ifta-2, osm-1, osm-5 and osm-6.

It is found in the cell projection. It localises to the cilium. Its function is as follows. Component of the intraflagellar transport (IFT) complex B required for transport of proteins in the motile cilium. Required for ciliary entrance and transport of specific ciliary cargo proteins such as che-3 which are related to motility. This Caenorhabditis elegans protein is Intraflagellar transport protein 20 homolog.